We begin with the raw amino-acid sequence, 762 residues long: uncharacterized protein (762 aa).

A disordered region spans residues 1 to 26; that stretch reads MENLKSASPEEDSPRHGDNMGKPKRI. The span at 12-21 shows a compositional bias: basic and acidic residues; the sequence is DSPRHGDNMG. A DNA-binding region (zn(2)-C6 fungal-type) is located at residues 30 to 57; the sequence is CDMCRKRKIRCDGKQPACSNCVSHGIPC. The interval 647-668 is disordered; that stretch reads QSHVPPRISSNHSDTSVKSNSP.

It is found in the nucleus. This is an uncharacterized protein from Schizosaccharomyces pombe (strain 972 / ATCC 24843) (Fission yeast).